A 125-amino-acid polypeptide reads, in one-letter code: Alpha-endosulfine (125 aa).

A compositionally biased stretch (basic and acidic residues) spans 1–37 (MSDKYIGDSHLEETGEEKQDSQEKEAVTPEKAEEQKL). The tract at residues 1 to 52 (MSDKYIGDSHLEETGEEKQDSQEKEAVTPEKAEEQKLKAKYPNLGQKPGGSD) is disordered. Thr-28 carries the phosphothreonine; by CDK2 modification. Ser-67 carries the post-translational modification Phosphoserine; by GWL. The segment at 86-107 (GPDKNLVTGDHIPTPQDLPQRK) is disordered. Thr-99 is modified (phosphothreonine; by CDK2). Ser-109 is subject to Phosphoserine; by PKA.

This sequence belongs to the endosulfine family. As to quaternary structure, interacts (when phosphorylated at Ser-67) with ppp2r2d. In terms of processing, phosphorylation at Ser-67 by gwl during mitosis is essential for interaction with PPP2R2D (PR55-delta) and subsequent inactivation of PP2A. Phosphorylated by PKA.

The protein resides in the cytoplasm. Functionally, protein phosphatase inhibitor that specifically inhibits protein phosphatase 2A (PP2A) during mitosis. When phosphorylated at Ser-67 during mitosis, specifically interacts with ppp2r2d (PR55-delta) and inhibits its activity, leading to inactivation of PP2A, an essential condition to keep cyclin-B1-CDK1 activity high during M phase. The protein is Alpha-endosulfine (ensa) of Xenopus laevis (African clawed frog).